Reading from the N-terminus, the 216-residue chain is MALSEAAVKVQAALHERGLETPMLPNVFTPEERKDKIEFHMKEILTLMSLDLSDDSLADTPRRIAKMYVDEIFSGLDYENFPKITVIDNKMGFDEMVRVQDISLTSTCEHHLVTIDGTATIAYIPRKKIIGLSKINRIVRFFSQRPQVQERLTQQVLVALQTLLETKDVAVKMDAVHYCVKSRGVMDSTSSTTTTALGGIFKSNPATRAEFLNQSK.

3 residues coordinate Zn(2+): cysteine 108, histidine 111, and cysteine 179.

This sequence belongs to the GTP cyclohydrolase I family. In terms of assembly, toroid-shaped homodecamer, composed of two pentamers of five dimers.

It carries out the reaction GTP + H2O = 7,8-dihydroneopterin 3'-triphosphate + formate + H(+). It participates in cofactor biosynthesis; 7,8-dihydroneopterin triphosphate biosynthesis; 7,8-dihydroneopterin triphosphate from GTP: step 1/1. The protein is GTP cyclohydrolase 1 of Shewanella sp. (strain MR-7).